We begin with the raw amino-acid sequence, 371 residues long: Spermatogenic leucine zipper protein 1 (371 aa).

Coiled coils occupy residues 96–148 and 177–289; these read EVSE…TVQD and FPHI…QKEE. Serine 98 is subject to Phosphoserine. Positions 110–120 are helix-loop-helix motif; that stretch reads INKELVKKLLA. The tract at residues 121–188 is basic motif; it reads SLDLGKKENA…HIQEENIRLR (68 aa). Serine 202 is modified (phosphoserine). Polar residues predominate over residues 223 to 240; that stretch reads KTLKNNGTHSPTQTNNES. The interval 223 to 246 is disordered; the sequence is KTLKNNGTHSPTQTNNESAKQELE. The segment at 245–266 is leucine-zipper; it reads LEEQVKRLKEDTYSLHLIATLL.

Phosphorylated by MAPK1/ERK2 and MAPK3/ERK1.

The protein localises to the cytoplasm. The protein resides in the nucleus. Functionally, transcription factor that binds to the DNA sequence 5'-CANNTG-3'(E box) and the G-box motif. May play an important role in the regulation of cell proliferation and differentiation during spermatogenesis. The polypeptide is Spermatogenic leucine zipper protein 1 (SPZ1) (Bos taurus (Bovine)).